The sequence spans 309 residues: MAIELNVGRKVTVTVPGSSANLGPGFDTLGLALSVYDTVEVEIIPSGLEVEVFGEGQGEVPLDGSHLVVKAIRAGLKAADAEVPGLRVVCHNNIPQSRGLGSSAAAAVAGVAAANGLADFPLTQEQIVQLSSAFEGHPDNAAASVLGGAVVSWTNLSIDGKSQPQYAAVPLEVQDNIRATALVPNFHASTEAVRRVLPTEVTHIDARFNVSRVAVMIVALQQRPDLLWEGTRDRLHQPYRAEVLPVTSEWVNRLRNRGYAAYLSGAGPTAMVLSTEPIPDKVLEDARESGIKVLELEVAGPVKVEVNQP.

95–105 (PQSRGLGSSAA) contacts ATP.

It belongs to the GHMP kinase family. Homoserine kinase subfamily.

The protein localises to the cytoplasm. The catalysed reaction is L-homoserine + ATP = O-phospho-L-homoserine + ADP + H(+). It functions in the pathway amino-acid biosynthesis; L-threonine biosynthesis; L-threonine from L-aspartate: step 4/5. In terms of biological role, catalyzes the ATP-dependent phosphorylation of L-homoserine to L-homoserine phosphate. This Corynebacterium glutamicum (strain R) protein is Homoserine kinase.